Consider the following 166-residue polypeptide: Small ribosomal subunit protein uS5 (166 aa).

One can recognise an S5 DRBM domain in the interval 11-74; sequence LIEKLVSVKR…ENAKKNMVSV (64 aa).

Belongs to the universal ribosomal protein uS5 family. Part of the 30S ribosomal subunit. Contacts proteins S4 and S8.

With S4 and S12 plays an important role in translational accuracy. Its function is as follows. Located at the back of the 30S subunit body where it stabilizes the conformation of the head with respect to the body. The sequence is that of Small ribosomal subunit protein uS5 from Francisella tularensis subsp. holarctica (strain LVS).